The primary structure comprises 275 residues: Diaminopimelate epimerase (275 aa).

Positions 20 and 63 each coordinate substrate. C72 (proton donor) is an active-site residue. Substrate-binding positions include 73-74 (GN), N179, and 197-198 (ER). The active-site Proton acceptor is C207. 208–209 (GT) provides a ligand contact to substrate.

Belongs to the diaminopimelate epimerase family. As to quaternary structure, homodimer.

It localises to the cytoplasm. The catalysed reaction is (2S,6S)-2,6-diaminopimelate = meso-2,6-diaminopimelate. The protein operates within amino-acid biosynthesis; L-lysine biosynthesis via DAP pathway; DL-2,6-diaminopimelate from LL-2,6-diaminopimelate: step 1/1. In terms of biological role, catalyzes the stereoinversion of LL-2,6-diaminopimelate (L,L-DAP) to meso-diaminopimelate (meso-DAP), a precursor of L-lysine and an essential component of the bacterial peptidoglycan. The polypeptide is Diaminopimelate epimerase (Chlamydia trachomatis serovar L2 (strain ATCC VR-902B / DSM 19102 / 434/Bu)).